We begin with the raw amino-acid sequence, 337 residues long: 2-oxoglutarate-Fe(II) type oxidoreductase (337 aa).

The region spanning 179-282 is the Fe2OG dioxygenase domain; the sequence is AIATLRYLHY…RYSIPFFFTG (104 aa). The Fe cation site is built by His205, Asp207, and His263. Residue Arg273 coordinates 2-oxoglutarate.

It belongs to the iron/ascorbate-dependent oxidoreductase family. Requires Fe(2+) as cofactor. Endocrocin is specifically produced in conidia.

Its pathway is secondary metabolite biosynthesis. Functionally, 2-oxoglutarate-Fe(II) type oxidoreductase; part of the gene cluster that mediates the biosynthesis of endocrocin, a simple anthraquinone interesting for many biotechnological applications. The pathway begins with the synthesis of atrochrysone thioester by the polyketide synthase (PKS) encA. The atrochrysone carboxyl ACP thioesterase encB then breaks the thioester bond and releases the atrochrysone carboxylic acid from encA. The atrochrysone carboxylic acid is then converted to endocrocin anthrone which is further oxidized into endocrocin by encC. The exact function of encD has not been identified yet, but it negatively regulates endocrocin production, likely through the modification of endocrocin itself. The polypeptide is 2-oxoglutarate-Fe(II) type oxidoreductase (Aspergillus fumigatus (strain ATCC MYA-4609 / CBS 101355 / FGSC A1100 / Af293) (Neosartorya fumigata)).